A 768-amino-acid chain; its full sequence is Kelch domain-containing protein 7A (768 aa).

The helical transmembrane segment at 12-29 (VVLSAAALLLVTVAYRLY) threads the bilayer. Residues 35-210 (PAQRWGGNAQ…PAPLQGSSDM (176 aa)) form a disordered region. S77 carries the post-translational modification Phosphoserine. Basic and acidic residues predominate over residues 104–118 (TDRKSQRKGSGEERG). A glycan (N-linked (GlcNAc...) asparagine) is linked at N248. The disordered stretch occupies residues 304–352 (LTEVPSPRPPPRSLGTGAASGGQAGDTKGAAERAASPQPGPSPSTRGFS). The Kelch 1 repeat unit spans residues 319-365 (TGAASGGQAGDTKGAAERAASPQPGPSPSTRGFSRKESLLQIAENPE). S356 is subject to Phosphoserine. The tract at residues 371–395 (DGFWLPAPPCPDPGALPGSGRSSQE) is disordered. 4 Kelch repeats span residues 483–529 (QYLV…ICSL), 532–580 (YLFV…ALDG), 581–623 (HLYA…ATAC), and 626–668 (EIFV…AVNG).

The protein localises to the membrane. The chain is Kelch domain-containing protein 7A (KLHDC7A) from Pongo abelii (Sumatran orangutan).